A 1373-amino-acid polypeptide reads, in one-letter code: Capping protein, Arp2/3 and myosin-I linker protein 3 (1373 aa).

The disordered stretch occupies residues 126–151; the sequence is RGNADTPEGPRDTSPNSETSTSTTHS. Positions 138 to 151 are enriched in low complexity; the sequence is TSPNSETSTSTTHS. LRR repeat units follow at residues 242 to 269, 272 to 299, 333 to 358, 390 to 417, 422 to 446, 453 to 475, 480 to 507, 510 to 536, 541 to 564, and 568 to 591; these read SGSLEELVLDNAGLKTDFVQKLAGVFGE, SCVLHALTLSHNPIEDKGFLSLSQQLLC, ASSLRYLDLSKNPGLLATDEANALYS, CSHLTYLNLARNSCSHRKGREAPPAFKQ, AYTLSHVNLSATRLPLEALRALLQG, LSDLHLDLSSCELRSAGAQALQE, VTCIGSLDLSDNGFDSDLLTLVPALGKN, LKHLFLGKNFNVKAKTLEEILHKLVQL, DCSLQSLSVADSRLKLRTSILINA, and NTCLAKVDLSGNGMEDIGAKMLSK. Disordered stretches follow at residues 864 to 902 and 970 to 1373; these read RTLSDPPGGAGPGQDPSSRGRGRSHDHEETDDELGTNID and LRHQ…PGTD. Residues 981–997 show a composition bias toward pro residues; that stretch reads PRTTPPGPGRPSVPVPG. The span at 1007 to 1022 shows a compositional bias: basic and acidic residues; that stretch reads RLDEGLEDFFSRRVMD. Positions 1047 to 1062 are enriched in basic residues; the sequence is QKRRRRGLFHFRRPRS. Over residues 1078–1097 the composition is skewed to pro residues; sequence LPPPPPPPPTQESPPSPDPP. Over residues 1098 to 1108 the composition is skewed to low complexity; that stretch reads SLGNNSSPCWS. Residues 1218–1228 are compositionally biased toward basic and acidic residues; the sequence is RRAEATWHIAE. Positions 1232 to 1243 are enriched in polar residues; the sequence is PNHSCQSPSPAS. Pro residues predominate over residues 1269–1278; that stretch reads PIGPRPPKPV. The span at 1345–1358 shows a compositional bias: basic and acidic residues; it reads QSCDKLEPDRRRPP.

This sequence belongs to the CARMIL family. As to expression, widely expressed, with much higher levels in fetal tissues than in adult ones. Highly expressed in newborn brain.

The protein localises to the cytoplasm. The protein resides in the cell membrane. The polypeptide is Capping protein, Arp2/3 and myosin-I linker protein 3 (Carmil3) (Rattus norvegicus (Rat)).